The chain runs to 124 residues: Small ribosomal subunit protein uS12 (124 aa).

Residue Asp-89 is modified to 3-methylthioaspartic acid.

This sequence belongs to the universal ribosomal protein uS12 family. Part of the 30S ribosomal subunit. Contacts proteins S8 and S17. May interact with IF1 in the 30S initiation complex.

Its function is as follows. With S4 and S5 plays an important role in translational accuracy. In terms of biological role, interacts with and stabilizes bases of the 16S rRNA that are involved in tRNA selection in the A site and with the mRNA backbone. Located at the interface of the 30S and 50S subunits, it traverses the body of the 30S subunit contacting proteins on the other side and probably holding the rRNA structure together. The combined cluster of proteins S8, S12 and S17 appears to hold together the shoulder and platform of the 30S subunit. This Vibrio vulnificus (strain CMCP6) protein is Small ribosomal subunit protein uS12.